The primary structure comprises 592 residues: V-type ATP synthase alpha chain (592 aa).

233 to 240 (GPFGSGKT) provides a ligand contact to ATP.

It belongs to the ATPase alpha/beta chains family.

It catalyses the reaction ATP + H2O + 4 H(+)(in) = ADP + phosphate + 5 H(+)(out). Functionally, produces ATP from ADP in the presence of a proton gradient across the membrane. The V-type alpha chain is a catalytic subunit. This is V-type ATP synthase alpha chain from Clostridium botulinum (strain Okra / Type B1).